We begin with the raw amino-acid sequence, 359 residues long: MESNYQRTLVSAFLNISVDQTVETAIKCLKSTNWKLEDAINLLFAIDRMRNNQTLTLKPSDSTRLPSLSPPPPLNLLFNGSFEDAKLASSSKDLWLLVHIQSETEFPCNTFNRDLWSNEDVSQALEFRFMLWQVYDHTSEGRKITSFYMIQHFLIDPITGQNICIWRGEIKAKGFLKDLKKYIDASPHEHIASTARNMRVKAEKICHSDQQDMVGFTDDDFDDFDEGNLSSDSVVVSSCGREFDDVVTLSEDEEETCLSSDLFEFPVLTKEPKGDCDRSVVCSISVRFPNGRRKQRKFLKSEPVQLLWSFCYSHMDESDNKAFKLVQAIPGASKTLDYGAEASFDQYGIANSIISVTWE.

One can recognise a UBX domain in the interval 277–357; the sequence is DRSVVCSISV…GIANSIISVT (81 aa).

The chain is Putative plant UBX domain-containing protein 15 from Arabidopsis thaliana (Mouse-ear cress).